A 155-amino-acid polypeptide reads, in one-letter code: Large ribosomal subunit protein eL24 (155 aa).

Basic and acidic residues predominate over residues 93–123; sequence KRNARPETRNATRAKHAEAAKERKEKEAERR. A disordered region spans residues 93-155; it reads KRNARPETRN…SAPKVQATSR (63 aa).

The protein belongs to the eukaryotic ribosomal protein eL24 family.

In Yarrowia lipolytica (strain CLIB 122 / E 150) (Yeast), this protein is Large ribosomal subunit protein eL24 (RPL24).